The sequence spans 810 residues: DNA replication licensing factor mcm-6 (810 aa).

An MCM domain is found at 346–553 (IEKNIVDSLF…VTDYAIARRI (208 aa)). ATP contacts are provided by Ser-400, Thr-401, Ala-402, Lys-403, Ser-404, and Asn-505. Positions 529-532 (SRFD) match the Arginine finger motif. The ADP site is built by Arg-622 and Glu-625. The segment at 685–705 (KENQGGDDDMEHDGEKDETAK) is disordered.

The protein belongs to the MCM family. As to quaternary structure, component of the mcm2-7 complex. The complex forms a toroidal hexameric ring with the proposed subunit order mcm2-mcm6-mcm4-mcm7-mcm3-mcm5 (By simililarity).

The protein localises to the nucleus. It catalyses the reaction ATP + H2O = ADP + phosphate + H(+). Acts as a component of the MCM2-7 complex (MCM complex) which is the replicative helicase essential for 'once per cell cycle' DNA replication initiation and elongation in eukaryotic cells. Core component of CDC45-MCM-GINS (CMG) helicase, the molecular machine that unwinds template DNA during replication, and around which the replisome is built. The active ATPase sites in the MCM2-7 ring are formed through the interaction surfaces of two neighboring subunits such that a critical structure of a conserved arginine finger motif is provided in trans relative to the ATP-binding site of the Walker A box of the adjacent subunit. The six ATPase active sites, however, are likely to contribute differentially to the complex helicase activity. This is DNA replication licensing factor mcm-6 from Caenorhabditis briggsae.